Reading from the N-terminus, the 185-residue chain is Ribosome-recycling factor (185 aa).

Belongs to the RRF family.

The protein localises to the cytoplasm. Its function is as follows. Responsible for the release of ribosomes from messenger RNA at the termination of protein biosynthesis. May increase the efficiency of translation by recycling ribosomes from one round of translation to another. This is Ribosome-recycling factor from Neisseria gonorrhoeae (strain ATCC 700825 / FA 1090).